The following is a 239-amino-acid chain: Octanoyltransferase (239 aa).

Positions 48–236 (EGGDELVWLV…AFETVFGETV (189 aa)) constitute a BPL/LPL catalytic domain. Substrate is bound by residues 87–94 (RGGEYTYH), 167–169 (ALG), and 180–182 (GLS). The active-site Acyl-thioester intermediate is the cysteine 198.

It belongs to the LipB family.

The protein localises to the cytoplasm. It catalyses the reaction octanoyl-[ACP] + L-lysyl-[protein] = N(6)-octanoyl-L-lysyl-[protein] + holo-[ACP] + H(+). It functions in the pathway protein modification; protein lipoylation via endogenous pathway; protein N(6)-(lipoyl)lysine from octanoyl-[acyl-carrier-protein]: step 1/2. Catalyzes the transfer of endogenously produced octanoic acid from octanoyl-acyl-carrier-protein onto the lipoyl domains of lipoate-dependent enzymes. Lipoyl-ACP can also act as a substrate although octanoyl-ACP is likely to be the physiological substrate. The polypeptide is Octanoyltransferase (Rhizobium etli (strain CIAT 652)).